The primary structure comprises 38 residues: Large ribosomal subunit protein bL36 (38 aa).

Belongs to the bacterial ribosomal protein bL36 family.

This is Large ribosomal subunit protein bL36 from Paraburkholderia phymatum (strain DSM 17167 / CIP 108236 / LMG 21445 / STM815) (Burkholderia phymatum).